A 604-amino-acid polypeptide reads, in one-letter code: Glucoamylase 1 (604 aa).

Positions 1 to 25 are cleaved as a signal peptide; it reads MQLFNLPLKVSFFLVLSYFSLLVSA. Residues 26 to 115 form an adsorption to raw starch region; it reads ASIPSSASVQ…EFYIKYEVSG (90 aa). Residues 26–130 form the CBM21 domain; that stretch reads ASIPSSASVQ…NNNSANYQVS (105 aa). Residues 116–604 are starch degradation; it reads KTYYDNNNSA…SYAKAGAPAA (489 aa). N-linked (GlcNAc...) asparagine glycosylation is present at N122. Residues 127–164 form a disordered region; that stretch reads YQVSTSKPTTTTATATTTTAPSTSTTTPPSRSEPATFP. Over residues 130–162 the composition is skewed to low complexity; the sequence is STSKPTTTTATATTTTAPSTSTTTPPSRSEPAT. N-linked (GlcNAc...) asparagine glycosylation is found at N167, N230, and N236. W279 is a substrate binding site. D336 serves as the catalytic Proton acceptor. E339 functions as the Proton donor in the catalytic mechanism. A glycan (N-linked (GlcNAc...) asparagine) is linked at N564.

This sequence belongs to the glycosyl hydrolase 15 family.

It catalyses the reaction Hydrolysis of terminal (1-&gt;4)-linked alpha-D-glucose residues successively from non-reducing ends of the chains with release of beta-D-glucose.. In Rhizopus oryzae (Mucormycosis agent), this protein is Glucoamylase 1.